The primary structure comprises 436 residues: Trigger factor (436 aa).

The PPIase FKBP-type domain maps to 163 to 248 (GDRVTVDFEG…VKKIEAANLP (86 aa)).

The protein belongs to the FKBP-type PPIase family. Tig subfamily.

The protein resides in the cytoplasm. The catalysed reaction is [protein]-peptidylproline (omega=180) = [protein]-peptidylproline (omega=0). Functionally, involved in protein export. Acts as a chaperone by maintaining the newly synthesized protein in an open conformation. Functions as a peptidyl-prolyl cis-trans isomerase. The sequence is that of Trigger factor from Delftia acidovorans (strain DSM 14801 / SPH-1).